Here is a 276-residue protein sequence, read N- to C-terminus: MRITLNELLDLDYEGVARSIEEFIKGYVESSGAKGVVVGLSGGVDSTTTLYLLVRALGPERVLVLVMPDSDVTPEEDVHDAVGIAERLGVRYKLIDIKPIVASYLVAMGEAPDRRSKGNLRARVRMTLLYLYANMEGLLVAGTGDRSELLIGYFTKYGDGAVDFLPIGCLYKSQVRRLALHLGVPEKIALKPSSPRLWPGQLAEDELGMKYEEIDLILYALFDKGLSPEEAAKATGLPIEKVRRVLELHRASEHKRSLPPAPDPAATVWRFRRRKG.

Position 39–46 (39–46 (GLSGGVDS)) interacts with ATP. D45 provides a ligand contact to Mg(2+). Residue R123 participates in deamido-NAD(+) binding. T143 is a binding site for ATP. Residue E148 coordinates Mg(2+). Deamido-NAD(+) contacts are provided by K156 and D163. The ATP site is built by K172 and S194. Residue 254–255 (HK) coordinates deamido-NAD(+).

This sequence belongs to the NAD synthetase family. In terms of assembly, homodimer.

The enzyme catalyses deamido-NAD(+) + NH4(+) + ATP = AMP + diphosphate + NAD(+) + H(+). It functions in the pathway cofactor biosynthesis; NAD(+) biosynthesis; NAD(+) from deamido-NAD(+) (ammonia route): step 1/1. Catalyzes the ATP-dependent amidation of deamido-NAD to form NAD. Uses ammonia as a nitrogen source. In Hyperthermus butylicus (strain DSM 5456 / JCM 9403 / PLM1-5), this protein is NH(3)-dependent NAD(+) synthetase.